The chain runs to 89 residues: MSSVNESLFEFPCDFPIKIMGKSHPEFAETIVTVVRQFDNEVDASRVETRPSSGGNYTGLTVTVRATSREQLDDIYRALTGHPMVKVVL.

The protein belongs to the UPF0250 family.

This Paraburkholderia phytofirmans (strain DSM 17436 / LMG 22146 / PsJN) (Burkholderia phytofirmans) protein is UPF0250 protein Bphyt_0500.